Here is a 438-residue protein sequence, read N- to C-terminus: Probable inactive protein kinase 38 (438 aa).

Residues 77-340 (PRFRLALGKG…FTELQPQYFL (264 aa)) enclose the Protein kinase domain.

This sequence belongs to the protein kinase superfamily. Tyr protein kinase family.

The chain is Probable inactive protein kinase 38 (36) from Equus caballus (Horse).